Reading from the N-terminus, the 435-residue chain is Trigger factor (435 aa).

One can recognise a PPIase FKBP-type domain in the interval 162-247 (GDRVIIDFKG…VKNVAEATLP (86 aa)).

This sequence belongs to the FKBP-type PPIase family. Tig subfamily.

Its subcellular location is the cytoplasm. The catalysed reaction is [protein]-peptidylproline (omega=180) = [protein]-peptidylproline (omega=0). Functionally, involved in protein export. Acts as a chaperone by maintaining the newly synthesized protein in an open conformation. Functions as a peptidyl-prolyl cis-trans isomerase. This Chromobacterium violaceum (strain ATCC 12472 / DSM 30191 / JCM 1249 / CCUG 213 / NBRC 12614 / NCIMB 9131 / NCTC 9757 / MK) protein is Trigger factor.